The primary structure comprises 538 residues: Nicotinate phosphoribosyltransferase (538 aa).

The nicotinate site is built by tyrosine 21 and threonine 210. A Phosphohistidine modification is found at histidine 213. Arginine 318 contacts nicotinate. Residue threonine 380 participates in 5-phospho-alpha-D-ribose 1-diphosphate binding.

The protein belongs to the NAPRTase family. As to quaternary structure, homodimer. Mg(2+) serves as cofactor. The cofactor is Mn(2+). Post-translationally, transiently phosphorylated on a His residue during the reaction cycle. Phosphorylation strongly increases the affinity for substrates and increases the rate of nicotinate D-ribonucleotide production. Dephosphorylation regenerates the low-affinity form of the enzyme, leading to product release. Abundantly expressed in the small intestine, liver and kidney.

It is found in the cytoplasm. It localises to the cytosol. It catalyses the reaction nicotinate + 5-phospho-alpha-D-ribose 1-diphosphate + ATP + H2O = nicotinate beta-D-ribonucleotide + ADP + phosphate + diphosphate. It participates in cofactor biosynthesis; NAD(+) biosynthesis; nicotinate D-ribonucleotide from nicotinate: step 1/1. Catalyzes the first step in the biosynthesis of NAD from nicotinic acid, the ATP-dependent synthesis of beta-nicotinate D-ribonucleotide from nicotinate and 5-phospho-D-ribose 1-phosphate. Helps prevent cellular oxidative stress via its role in NAD biosynthesis. In Mus musculus (Mouse), this protein is Nicotinate phosphoribosyltransferase (Naprt).